An 868-amino-acid chain; its full sequence is Coatomer subunit gamma (868 aa).

A compositionally biased stretch (basic residues) spans 1-11 (MWRTKRGRTRR). Residues 1-22 (MWRTKRGRTRRRDAGGNPWQNL) are disordered. 4 HEAT repeats span residues 64 to 101 (REAT…IADD), 287 to 324 (RELS…LHPP), 326 to 359 (VNVC…GAES), and 360 to 396 (SVER…KFPR).

The protein belongs to the COPG family. As to quaternary structure, oligomeric complex that consists of at least the alpha, beta, beta', gamma, delta, epsilon and zeta subunits.

It localises to the cytoplasm. Its subcellular location is the golgi apparatus membrane. The protein resides in the cytoplasmic vesicle. It is found in the COPI-coated vesicle membrane. The protein localises to the endoplasmic reticulum. Its function is as follows. The coatomer is a cytosolic protein complex that binds to dilysine motifs and reversibly associates with Golgi non-clathrin-coated vesicles, which further mediate biosynthetic protein transport from the ER, via the Golgi up to the trans Golgi network. Coatomer complex is required for budding from Golgi membranes, and is essential for the retrograde Golgi-to-ER transport of dilysine-tagged proteins. The sequence is that of Coatomer subunit gamma from Anopheles gambiae (African malaria mosquito).